We begin with the raw amino-acid sequence, 133 residues long: NLP effector protein 14 (133 aa).

The Conserved undecapeptide motifI I motif lies at 1-9 (MYSWYFPKD). Residues 16–22 (GHRHDWE) carry the Hepta-peptide GHRHDWE motif II motif.

The protein belongs to the Necrosis inducing protein (NPP1) family.

It localises to the secreted. In terms of biological role, secreted effector that contributes strongly to virulence during infection by P.capsici. Causes large necrotic areas in both host C.annuum and non-host N.benthamiana. In Phytophthora capsici, this protein is NLP effector protein 14.